We begin with the raw amino-acid sequence, 1704 residues long: Villidin (1704 aa).

WD repeat units follow at residues 82-122 (GHTD…LIKD), 133-173 (KQQK…EQSS), 180-221 (GHED…TPIQ), and 225-271 (THEG…SSQP). Disordered regions lie at residues 439–460 (IGNSGSGGGGGDGDGNGGDSPF) and 606–721 (SVPS…NSST). Residues 442-456 (SGSGGGGGDGDGNGG) show a composition bias toward gly residues. The 105-residue stretch at 459-563 (PFITEGIVKQ…WCQSINAYRE (105 aa)) folds into the PH 1 domain. Composition is skewed to low complexity over residues 613-636 (QQQQQQQGSESPNSTTPKSSTPTQ), 651-701 (SLKS…SSSS), and 709-721 (NNSTSSTPLNSST). PH domains lie at 727-828 (DIVI…QNLK) and 871-969 (EQPL…AARK). A disordered region spans residues 848–877 (LISSPMSDDESNTNEGGVEEEEEEQPLEGQ). Residues 854 to 873 (SDDESNTNEGGVEEEEEEQP) are compositionally biased toward acidic residues. Gelsolin-like repeat units lie at residues 1025–1119 (KQKI…LGGN), 1138–1241 (IKTT…FANY), 1293–1390 (GRVK…FKTK), 1404–1494 (KKPS…FEST), and 1520–1615 (RFFV…FRAW). Positions 1641-1704 (DYLKEIYTYE…EGIKKELFLF (64 aa)) constitute an HP domain.

It localises to the membrane. It is found in the cytoplasm. Its subcellular location is the cytoskeleton. May function as a linker between membranes and the actin cytoskeleton. This is Villidin (vilA) from Dictyostelium discoideum (Social amoeba).